The chain runs to 167 residues: uncharacterized protein (167 aa).

DED domains lie at D2 to Q75 and T93 to V167.

This is an uncharacterized protein from Saimiriine herpesvirus 2 (strain 11) (SaHV-2).